The chain runs to 466 residues: UDP-glycosyltransferase 79 (466 aa).

The active-site Proton acceptor is the His27. His27 contacts UDP-alpha-D-glucose. Asp120 serves as the catalytic Charge relay. 11 residues coordinate UDP-alpha-D-glucose: Ser142, Thr291, Phe343, Cys344, His361, Trp364, Asn365, Ser366, Glu369, Asp385, and Gln386. UDP-binding residues include Thr291, Phe343, Cys344, and His361. Asn365, Ser366, and Glu369 together coordinate UDP.

It belongs to the UDP-glycosyltransferase family.

Functionally, involved in the detoxification of the Fusarium mycotoxin deoxynivalenol by the transfer of glucose from UDP-D-glucose to the hydroxyl group at C-3, forming deoxynivalenol-3-O-beta-D-glucoside. This is UDP-glycosyltransferase 79 from Oryza sativa subsp. japonica (Rice).